The following is an 87-amino-acid chain: Large ribosomal subunit protein bL27 (87 aa).

Belongs to the bacterial ribosomal protein bL27 family.

This chain is Large ribosomal subunit protein bL27, found in Stenotrophomonas maltophilia (strain R551-3).